We begin with the raw amino-acid sequence, 447 residues long: Chitobiosyldiphosphodolichol beta-mannosyltransferase (447 aa).

Residues 1–8 are Lumenal-facing; the sequence is MSVFGFDN. The chain crosses the membrane as a helical span at residues 9–29; that stretch reads IPTWLWWLLAIYLATPFVLYV. Residues 30 to 127 lie on the Cytoplasmic side of the membrane; that stretch reads VQPYLFYEGK…LCSMFWKLRA (98 aa). Positions 128–148 form an intramembrane region, helical; it reads VDYILLQNPPTIPILPIAVVV. Residues 149-447 lie on the Lumenal side of the membrane; that stretch reads KTFSRAKLII…ALSELKIIHK (299 aa).

The protein belongs to the glycosyltransferase group 1 family.

Its subcellular location is the endoplasmic reticulum membrane. It carries out the reaction an N,N'-diacetylchitobiosyl-diphospho-di-trans,poly-cis-dolichol + GDP-alpha-D-mannose = a beta-D-Man-(1-&gt;4)-beta-D-GlcNAc-(1-&gt;4)-alpha-D-GlcNAc-diphospho-di-trans,poly-cis-dolichol + GDP + H(+). The protein operates within protein modification; protein glycosylation. In terms of biological role, participates in the formation of the lipid-linked precursor oligosaccharide for N-glycosylation. Involved in assembling the dolichol-pyrophosphate-GlcNAc(2)-Man(5) intermediate on the cytoplasmic surface of the ER. This chain is Chitobiosyldiphosphodolichol beta-mannosyltransferase (ALG1), found in Kluyveromyces lactis (strain ATCC 8585 / CBS 2359 / DSM 70799 / NBRC 1267 / NRRL Y-1140 / WM37) (Yeast).